A 156-amino-acid chain; its full sequence is Endoribonuclease YbeY (156 aa).

Zn(2+) is bound by residues His-122, His-126, and His-132.

The protein belongs to the endoribonuclease YbeY family. It depends on Zn(2+) as a cofactor.

The protein localises to the cytoplasm. Single strand-specific metallo-endoribonuclease involved in late-stage 70S ribosome quality control and in maturation of the 3' terminus of the 16S rRNA. In Pediococcus pentosaceus (strain ATCC 25745 / CCUG 21536 / LMG 10740 / 183-1w), this protein is Endoribonuclease YbeY.